The primary structure comprises 499 residues: Probable cytosol aminopeptidase (499 aa).

Mn(2+)-binding residues include lysine 271 and aspartate 276. Lysine 283 is a catalytic residue. Positions 294, 353, and 355 each coordinate Mn(2+). Arginine 357 is an active-site residue.

It belongs to the peptidase M17 family. Mn(2+) is required as a cofactor.

It is found in the cytoplasm. It carries out the reaction Release of an N-terminal amino acid, Xaa-|-Yaa-, in which Xaa is preferably Leu, but may be other amino acids including Pro although not Arg or Lys, and Yaa may be Pro. Amino acid amides and methyl esters are also readily hydrolyzed, but rates on arylamides are exceedingly low.. It catalyses the reaction Release of an N-terminal amino acid, preferentially leucine, but not glutamic or aspartic acids.. Presumably involved in the processing and regular turnover of intracellular proteins. Catalyzes the removal of unsubstituted N-terminal amino acids from various peptides. This Bordetella bronchiseptica (strain ATCC BAA-588 / NCTC 13252 / RB50) (Alcaligenes bronchisepticus) protein is Probable cytosol aminopeptidase.